Here is a 295-residue protein sequence, read N- to C-terminus: Diaminopimelate epimerase (295 aa).

Residues Asn13, Gln46, and Asn66 each contribute to the substrate site. Cys75 (proton donor) is an active-site residue. Substrate contacts are provided by residues 76-77 (GN), Asn162, Asn195, and 213-214 (ER). The Proton acceptor role is filled by Cys222. 223–224 (GT) contacts substrate.

Belongs to the diaminopimelate epimerase family. Homodimer.

The protein resides in the cytoplasm. It catalyses the reaction (2S,6S)-2,6-diaminopimelate = meso-2,6-diaminopimelate. It functions in the pathway amino-acid biosynthesis; L-lysine biosynthesis via DAP pathway; DL-2,6-diaminopimelate from LL-2,6-diaminopimelate: step 1/1. Catalyzes the stereoinversion of LL-2,6-diaminopimelate (L,L-DAP) to meso-diaminopimelate (meso-DAP), a precursor of L-lysine and an essential component of the bacterial peptidoglycan. The polypeptide is Diaminopimelate epimerase (Psychrobacter arcticus (strain DSM 17307 / VKM B-2377 / 273-4)).